We begin with the raw amino-acid sequence, 187 residues long: Crossover junction endodeoxyribonuclease RuvC (187 aa).

Residues Asp7, Glu67, and Asp140 contribute to the active site. Asp7, Glu67, and Asp140 together coordinate Mg(2+).

It belongs to the RuvC family. As to quaternary structure, homodimer which binds Holliday junction (HJ) DNA. The HJ becomes 2-fold symmetrical on binding to RuvC with unstacked arms; it has a different conformation from HJ DNA in complex with RuvA. In the full resolvosome a probable DNA-RuvA(4)-RuvB(12)-RuvC(2) complex forms which resolves the HJ. Mg(2+) serves as cofactor.

The protein localises to the cytoplasm. The catalysed reaction is Endonucleolytic cleavage at a junction such as a reciprocal single-stranded crossover between two homologous DNA duplexes (Holliday junction).. Functionally, the RuvA-RuvB-RuvC complex processes Holliday junction (HJ) DNA during genetic recombination and DNA repair. Endonuclease that resolves HJ intermediates. Cleaves cruciform DNA by making single-stranded nicks across the HJ at symmetrical positions within the homologous arms, yielding a 5'-phosphate and a 3'-hydroxyl group; requires a central core of homology in the junction. The consensus cleavage sequence is 5'-(A/T)TT(C/G)-3'. Cleavage occurs on the 3'-side of the TT dinucleotide at the point of strand exchange. HJ branch migration catalyzed by RuvA-RuvB allows RuvC to scan DNA until it finds its consensus sequence, where it cleaves and resolves the cruciform DNA. In Chlorobium phaeobacteroides (strain DSM 266 / SMG 266 / 2430), this protein is Crossover junction endodeoxyribonuclease RuvC.